Consider the following 891-residue polypeptide: DNA mismatch repair protein MutS (891 aa).

634 to 641 (GPNMGGKS) is a binding site for ATP.

The protein belongs to the DNA mismatch repair MutS family.

In terms of biological role, this protein is involved in the repair of mismatches in DNA. It is possible that it carries out the mismatch recognition step. This protein has a weak ATPase activity. This Burkholderia pseudomallei (strain 668) protein is DNA mismatch repair protein MutS.